Consider the following 707-residue polypeptide: Signal transducer and activator of transcription A (707 aa).

Polar residues predominate over residues 70 to 89 (LNQSDQFNLGRSNNLTPRTN). Residues 70-246 (LNQSDQFNLG…GNPNLSSPQP (177 aa)) form a disordered region. A compositionally biased stretch (low complexity) spans 90 to 111 (QLQQLQQQQQQQQQPQQQQQQQ). Positions 112–121 (TYGTQSPIHM) are enriched in polar residues. Residues 142–238 (QQSYNNNNSN…QQQQQQQQGN (97 aa)) are compositionally biased toward low complexity. Residues 242 to 356 (SSPQPILDTI…IQSILNPQHS (115 aa)) are a coiled coil. Residues 443 to 487 (KFLAGTRKCSVNLKFGVNIRDLDNVTTTVESDASNPFVVITNECQ) mediate DNA binding. Positions 583–686 (WQEGIIYGYM…FLKLHKDTAL (104 aa)) constitute an SH2 domain. Y702 is subject to Phosphotyrosine.

The protein belongs to the transcription factor STAT family. Monomer, in the absence of tyrosine phosphorylation. Homodimer, or heterodimer with another family member, when tyrosine phosphorylated. In terms of processing, tyrosine phosphorylated in response to cAMP. Not tyrosine phosphorylated in growing cells. Tyrosine phosphorylation is first detected at the tight mound stage, continues throughout the slug stage and early culmination, and starts to decrease at mid-culmination. Barely detectable in fruiting bodies.

The protein resides in the cytoplasm. It is found in the nucleus. Its function is as follows. Transcription factor that binds to 5'-TTGAATTGA-3' elements in the promoter region of target genes. Functions as a repressor of the ecmB gene. Regulates the differentiation of prestalk cells during development. The protein is Signal transducer and activator of transcription A (dstA) of Dictyostelium discoideum (Social amoeba).